A 158-amino-acid polypeptide reads, in one-letter code: NAD(P)H-quinone oxidoreductase subunit J, chloroplastic (158 aa).

The protein belongs to the complex I 30 kDa subunit family. NDH is composed of at least 16 different subunits, 5 of which are encoded in the nucleus.

The protein resides in the plastid. It localises to the chloroplast thylakoid membrane. It carries out the reaction a plastoquinone + NADH + (n+1) H(+)(in) = a plastoquinol + NAD(+) + n H(+)(out). It catalyses the reaction a plastoquinone + NADPH + (n+1) H(+)(in) = a plastoquinol + NADP(+) + n H(+)(out). In terms of biological role, NDH shuttles electrons from NAD(P)H:plastoquinone, via FMN and iron-sulfur (Fe-S) centers, to quinones in the photosynthetic chain and possibly in a chloroplast respiratory chain. The immediate electron acceptor for the enzyme in this species is believed to be plastoquinone. Couples the redox reaction to proton translocation, and thus conserves the redox energy in a proton gradient. The sequence is that of NAD(P)H-quinone oxidoreductase subunit J, chloroplastic from Buxus microphylla (Littleleaf boxwood).